The sequence spans 319 residues: Carbonic anhydrase, chloroplastic (319 aa).

The transit peptide at 1–98 (MSTINGCLTS…AASKVAQITS (98 aa)) directs the protein to the chloroplast.

It belongs to the beta-class carbonic anhydrase family. In terms of assembly, homohexamer.

It localises to the plastid. The protein resides in the chloroplast stroma. The enzyme catalyses hydrogencarbonate + H(+) = CO2 + H2O. In terms of biological role, reversible hydration of carbon dioxide. This chain is Carbonic anhydrase, chloroplastic, found in Spinacia oleracea (Spinach).